Reading from the N-terminus, the 467-residue chain is Squalene synthase (467 aa).

The protein belongs to the phytoene/squalene synthase family. It depends on Mg(2+) as a cofactor.

It catalyses the reaction 2 (2E,6E)-farnesyl diphosphate + NADPH + H(+) = squalene + 2 diphosphate + NADP(+). It carries out the reaction 2 (2E,6E)-farnesyl diphosphate + NADH + H(+) = squalene + 2 diphosphate + NAD(+). It participates in terpene metabolism; lanosterol biosynthesis; lanosterol from farnesyl diphosphate: step 1/3. Its function is as follows. Squalene synthase; part of the third module of ergosterol biosynthesis pathway that includes the late steps of the pathway. The third module or late pathway involves the ergosterol synthesis itself through consecutive reactions that mainly occur in the endoplasmic reticulum (ER) membrane. Firstly, the squalene synthase SQS catalyzes the condensation of 2 farnesyl pyrophosphate moieties to form squalene, which is the precursor of all steroids. Secondly, the squalene epoxidase catalyzes the stereospecific oxidation of squalene to (S)-2,3-epoxysqualene, which is considered to be a rate-limiting enzyme in steroid biosynthesis. Then, the lanosterol synthase LS catalyzes the cyclization of (S)-2,3 oxidosqualene to lanosterol, a reaction that forms the sterol core. In the next steps, lanosterol is transformed to ergosterol via a complex process involving various demethylation, reduction and desaturation reactions. Lanosterol is also an intermediate in the biosynthesis of triterpenes such as ganoderic acids (GA), a group of highly oxygenated lanostane-type triterpenoids which are well recognized as a main group of unique bioactive compounds in the medicinal mushroom Ganoderma lucidum. The polypeptide is Squalene synthase (Ganoderma lucidum (Ling zhi medicinal fungus)).